The primary structure comprises 257 residues: NH(3)-dependent NAD(+) synthetase (257 aa).

An ATP-binding site is contributed by 28 to 35; it reads GISGGVDS. Residue Asp34 participates in Mg(2+) binding. A deamido-NAD(+)-binding site is contributed by Arg109. Thr129 is a binding site for ATP. Glu134 contacts Mg(2+). Deamido-NAD(+) contacts are provided by Lys142 and Asp149. The ATP site is built by Lys158 and Ser180. 240–241 provides a ligand contact to deamido-NAD(+); the sequence is HK.

It belongs to the NAD synthetase family. In terms of assembly, homodimer.

It catalyses the reaction deamido-NAD(+) + NH4(+) + ATP = AMP + diphosphate + NAD(+) + H(+). It participates in cofactor biosynthesis; NAD(+) biosynthesis; NAD(+) from deamido-NAD(+) (ammonia route): step 1/1. Functionally, catalyzes the ATP-dependent amidation of deamido-NAD to form NAD. Uses ammonia as a nitrogen source. The chain is NH(3)-dependent NAD(+) synthetase from Pyrococcus horikoshii (strain ATCC 700860 / DSM 12428 / JCM 9974 / NBRC 100139 / OT-3).